The sequence spans 527 residues: Glutamate--cysteine ligase (527 aa).

The protein belongs to the glutamate--cysteine ligase type 1 family. Type 1 subfamily.

The enzyme catalyses L-cysteine + L-glutamate + ATP = gamma-L-glutamyl-L-cysteine + ADP + phosphate + H(+). It functions in the pathway sulfur metabolism; glutathione biosynthesis; glutathione from L-cysteine and L-glutamate: step 1/2. The chain is Glutamate--cysteine ligase from Bordetella parapertussis (strain 12822 / ATCC BAA-587 / NCTC 13253).